The sequence spans 323 residues: Elongation factor P--(R)-beta-lysine ligase (323 aa).

A substrate-binding site is contributed by 76-78; the sequence is SPE. ATP contacts are provided by residues 100–102 and Asn109; that span reads RNE. Tyr118 provides a ligand contact to substrate. 242 to 243 serves as a coordination point for ATP; the sequence is EL. Residue Glu249 participates in substrate binding. Gly298 provides a ligand contact to ATP.

It belongs to the class-II aminoacyl-tRNA synthetase family. EpmA subfamily. Homodimer.

It catalyses the reaction D-beta-lysine + L-lysyl-[protein] + ATP = N(6)-((3R)-3,6-diaminohexanoyl)-L-lysyl-[protein] + AMP + diphosphate + H(+). In terms of biological role, with EpmB is involved in the beta-lysylation step of the post-translational modification of translation elongation factor P (EF-P). Catalyzes the ATP-dependent activation of (R)-beta-lysine produced by EpmB, forming a lysyl-adenylate, from which the beta-lysyl moiety is then transferred to the epsilon-amino group of a conserved specific lysine residue in EF-P. This Mannheimia succiniciproducens (strain KCTC 0769BP / MBEL55E) protein is Elongation factor P--(R)-beta-lysine ligase.